Consider the following 435-residue polypeptide: Serine--tRNA ligase (435 aa).

234-236 contacts L-serine; sequence TAE. 265–267 serves as a coordination point for ATP; that stretch reads RRE. Residue Glu-288 participates in L-serine binding. 352–355 contributes to the ATP binding site; the sequence is EISS. Position 388 (Ser-388) interacts with L-serine.

Belongs to the class-II aminoacyl-tRNA synthetase family. Type-1 seryl-tRNA synthetase subfamily. Homodimer. The tRNA molecule binds across the dimer.

It localises to the cytoplasm. It carries out the reaction tRNA(Ser) + L-serine + ATP = L-seryl-tRNA(Ser) + AMP + diphosphate + H(+). It catalyses the reaction tRNA(Sec) + L-serine + ATP = L-seryl-tRNA(Sec) + AMP + diphosphate + H(+). The protein operates within aminoacyl-tRNA biosynthesis; selenocysteinyl-tRNA(Sec) biosynthesis; L-seryl-tRNA(Sec) from L-serine and tRNA(Sec): step 1/1. Catalyzes the attachment of serine to tRNA(Ser). Is also able to aminoacylate tRNA(Sec) with serine, to form the misacylated tRNA L-seryl-tRNA(Sec), which will be further converted into selenocysteinyl-tRNA(Sec). The sequence is that of Serine--tRNA ligase from Synechococcus sp. (strain JA-2-3B'a(2-13)) (Cyanobacteria bacterium Yellowstone B-Prime).